A 484-amino-acid polypeptide reads, in one-letter code: Tribbles (484 aa).

Residues 1-23 (MDNSSGQNSRTASSASTSKIVNY) are compositionally biased toward polar residues. A disordered region spans residues 1 to 51 (MDNSSGQNSRTASSASTSKIVNYSSPVSPGVAAATSSSSSSSSSGMSSSQE). Residues 24-49 (SSPVSPGVAAATSSSSSSSSSGMSSS) are compositionally biased toward low complexity. The Protein kinase domain maps to 129 to 397 (YRHLVDLTAS…ASHIFLTPWL (269 aa)). Acidic residues-rich tracts occupy residues 420–437 (AEED…DEEG) and 475–484 (PEPDTDVDMG). 2 disordered regions span residues 420–443 (AEED…PLGD) and 464–484 (MAQN…VDMG).

This sequence belongs to the protein kinase superfamily. CAMK Ser/Thr protein kinase family. Tribbles subfamily. Interacts with slbo. Interacts with Akt1. Expressed throughout the brain with highest levels of expression detected in the cell body rind and lower levels of expression detected in the neurophil (at protein level).

It localises to the nucleus. Its subcellular location is the cytoplasm. It is found in the cell cortex. In terms of biological role, adapter protein that negatively regulates different signaling pathways to coordinate cell differentiation, proliferation, migration and growth. Functions by binding to key regulatory proteins and either blocks their activity or regulates their turnover by the proteasome. In various developing tissues functions as a cell cycle regulator that mediates cell proliferation according to the requirements of the developmental program. Acts by inducing the proteasomal degradation of the CD25 mitotic activators stg and twe at critical stages of development to delay entry into mitosis and thus mediate cell proliferation. During gastrulation, negatively regulates stg to delay mitosis in the ventral region of the embryonic mesoderm thus allowing invagination to be completed before cell division takes place. Delaying stg-dependent mitosis during bristle development and in migrating germline pole cells also arrests their cell divisions, whereas in cystocytes it promotes their cell divisions. Involved in the regulation of the mid-blastula transition; promotes the destruction of twe resulting in the cell cycle arrest in G2 of cycle 14 which delays mitosis and thus reduces cell proliferation allowing cell fate specification and morphogenesis to take place. In germline cells, blocks border cell migration during oogenesis by binding to slbo/C/EBP and promoting its ubiquitination and degradation by the proteasome. May function in a negative feedback loop with slbo to coordinate proper border cell migration. During tissue growth negatively regulates insulin signaling by binding to Akt1 and blocking its phosphorylation-dependent activation. However it may also function downstream in the insulin signaling pathway, acting with Akt1 to direct foxo degradation. Essential for the proper formation of operant place and aversive olfactory memories. The protein is Tribbles of Drosophila melanogaster (Fruit fly).